The chain runs to 57 residues: UPF0391 membrane protein Smed_4051 (57 aa).

2 helical membrane-spanning segments follow: residues 4–24 (WALI…SGIS) and 33–53 (ILFY…LAVG).

The protein belongs to the UPF0391 family.

It localises to the cell membrane. In Sinorhizobium medicae (strain WSM419) (Ensifer medicae), this protein is UPF0391 membrane protein Smed_4051.